Reading from the N-terminus, the 328-residue chain is Ketol-acid reductoisomerase (NADP(+)) (328 aa).

The KARI N-terminal Rossmann domain maps to 1 to 181 (MKIYYENDID…GLARAGVLET (181 aa)). NADP(+)-binding positions include 24–27 (YGSQ), arginine 47, serine 52, and 82–85 (DEIQ). The active site involves histidine 107. NADP(+) is bound at residue glycine 133. The region spanning 182–327 (TFREETETDL…SKLRKLCGLE (146 aa)) is the KARI C-terminal knotted domain. Aspartate 190, glutamate 194, glutamate 226, and glutamate 230 together coordinate Mg(2+). Residue serine 251 coordinates substrate.

This sequence belongs to the ketol-acid reductoisomerase family. It depends on Mg(2+) as a cofactor.

It carries out the reaction (2R)-2,3-dihydroxy-3-methylbutanoate + NADP(+) = (2S)-2-acetolactate + NADPH + H(+). It catalyses the reaction (2R,3R)-2,3-dihydroxy-3-methylpentanoate + NADP(+) = (S)-2-ethyl-2-hydroxy-3-oxobutanoate + NADPH + H(+). It participates in amino-acid biosynthesis; L-isoleucine biosynthesis; L-isoleucine from 2-oxobutanoate: step 2/4. It functions in the pathway amino-acid biosynthesis; L-valine biosynthesis; L-valine from pyruvate: step 2/4. Functionally, involved in the biosynthesis of branched-chain amino acids (BCAA). Catalyzes an alkyl-migration followed by a ketol-acid reduction of (S)-2-acetolactate (S2AL) to yield (R)-2,3-dihydroxy-isovalerate. In the isomerase reaction, S2AL is rearranged via a Mg-dependent methyl migration to produce 3-hydroxy-3-methyl-2-ketobutyrate (HMKB). In the reductase reaction, this 2-ketoacid undergoes a metal-dependent reduction by NADPH to yield (R)-2,3-dihydroxy-isovalerate. The polypeptide is Ketol-acid reductoisomerase (NADP(+)) (Methanothermobacter thermautotrophicus (strain ATCC 29096 / DSM 1053 / JCM 10044 / NBRC 100330 / Delta H) (Methanobacterium thermoautotrophicum)).